The primary structure comprises 42 residues: Cytochrome b6-f complex subunit 7 (42 aa).

Residues 19–37 (AVVCFSMTLFGLSLGFGLL) form a helical membrane-spanning segment.

Belongs to the PetM family. As to quaternary structure, the 4 large subunits of the cytochrome b6-f complex are cytochrome b6, subunit IV (17 kDa polypeptide, PetD), cytochrome f and the Rieske protein, while the 4 small subunits are PetG, PetL, PetM and PetN. The complex functions as a dimer.

The protein localises to the plastid. The protein resides in the chloroplast thylakoid membrane. Component of the cytochrome b6-f complex, which mediates electron transfer between photosystem II (PSII) and photosystem I (PSI), cyclic electron flow around PSI, and state transitions. The polypeptide is Cytochrome b6-f complex subunit 7 (Phaeodactylum tricornutum (strain CCAP 1055/1)).